The sequence spans 342 residues: Large ribosomal subunit protein uL10 (342 aa).

The tract at residues 212 to 342 (EYIDMLQKAY…ALAGLSALFG (131 aa)) is required for interaction with ribosomal protein L12 dimers. Residues 299–308 (QAQVAVATQP) show a composition bias toward polar residues. Residues 299-342 (QAQVAVATQPSEEEKKEEEKTEEEEKEEEASEEEALAGLSALFG) form a disordered region. Residues 318–333 (KTEEEEKEEEASEEEA) are compositionally biased toward acidic residues.

It belongs to the universal ribosomal protein uL10 family. Part of the 50S ribosomal subunit, binds large rRNA. Forms the ribosomal stalk which helps the ribosome interact with GTP-bound translation factors. Forms a heptameric L10(L12)2(L12)2(L12)2 complex, where L10 forms an elongated spine to which the L12 dimers bind in a sequential fashion.

Forms the large subunit's ribosomal stalk, playing a central role in the interaction of the ribosome with elongation factors; the stalk complex of P.horikoshii binds to E.coli large subunits and confers on them the ability to interact with eukaryotic elongation factors. Each succesive L12 dimer bound along the P0 spine increases the GTPase activity of elongation factors and increases translation by reconsituted ribosomes, although the first site is the most stimulatory. This is Large ribosomal subunit protein uL10 from Pyrococcus horikoshii (strain ATCC 700860 / DSM 12428 / JCM 9974 / NBRC 100139 / OT-3).